An 84-amino-acid chain; its full sequence is MKRPERRTLVGLVTSDKMHKTVTVRITTKKLHALYKKYVSRSKKYQAHDEENTARAGDVVRIAESRPLSRRKRWRLVEIVERAK.

It belongs to the universal ribosomal protein uS17 family. In terms of assembly, part of the 30S ribosomal subunit.

Its function is as follows. One of the primary rRNA binding proteins, it binds specifically to the 5'-end of 16S ribosomal RNA. This chain is Small ribosomal subunit protein uS17, found in Treponema pallidum (strain Nichols).